We begin with the raw amino-acid sequence, 483 residues long: Altronate oxidoreductase (483 aa).

NAD(+) is bound at residue 18–29 (IIQFGEGNFLRA).

The protein belongs to the mannitol dehydrogenase family. UxaB subfamily.

It catalyses the reaction D-altronate + NAD(+) = keto-D-tagaturonate + NADH + H(+). It participates in carbohydrate metabolism; pentose and glucuronate interconversion. The protein is Altronate oxidoreductase of Escherichia coli O1:K1 / APEC.